The following is a 106-amino-acid chain: ATP-dependent Clp protease adapter protein ClpS (106 aa).

Residues 1–10 (MSQKTVHDQD) show a composition bias toward basic and acidic residues. The disordered stretch occupies residues 1–22 (MSQKTVHDQDNALLLETGNTKV).

The protein belongs to the ClpS family. Binds to the N-terminal domain of the chaperone ClpA.

Involved in the modulation of the specificity of the ClpAP-mediated ATP-dependent protein degradation. The protein is ATP-dependent Clp protease adapter protein ClpS of Xylella fastidiosa (strain 9a5c).